We begin with the raw amino-acid sequence, 106 residues long: MMIASKFGIGQQVRHKLLGYLGVVVDVDAEYSLDQPNEDDIASNMTLRSAPWYHVVMEDDEGQPVHTYLAEAQITYELSDEHLDNDSMDELSQSIRNQLQAPRLRN.

Residues 80–106 (DEHLDNDSMDELSQSIRNQLQAPRLRN) are disordered. A compositionally biased stretch (polar residues) spans 90 to 100 (ELSQSIRNQLQ).

Belongs to the HspQ family.

The protein localises to the cytoplasm. Functionally, involved in the degradation of certain denaturated proteins, including DnaA, during heat shock stress. The sequence is that of Heat shock protein HspQ from Proteus mirabilis (strain HI4320).